A 260-amino-acid polypeptide reads, in one-letter code: ATP-dependent zinc metalloprotease FTSH, chloroplastic (260 aa).

H219 contributes to the Zn(2+) binding site. E220 is an active-site residue. Position 223 (H223) interacts with Zn(2+).

In the N-terminal section; belongs to the AAA ATPase family. This sequence in the C-terminal section; belongs to the peptidase M41 family. Zn(2+) serves as cofactor.

It is found in the plastid. Its subcellular location is the chloroplast thylakoid membrane. Functionally, probable ATP-dependent zinc metallopeptidase. The sequence is that of ATP-dependent zinc metalloprotease FTSH, chloroplastic from Helianthus annuus (Common sunflower).